We begin with the raw amino-acid sequence, 292 residues long: Protein-L-isoaspartate O-methyltransferase (292 aa).

Positions 1–76 (MTEKKRFPLS…AAAPSSNERA (76 aa)) are disordered. Residues 28 to 48 (NRSSTSGKVATPQTATQNASQ) show a composition bias toward polar residues. Residue S138 is part of the active site.

The protein belongs to the methyltransferase superfamily. L-isoaspartyl/D-aspartyl protein methyltransferase family.

Its subcellular location is the cytoplasm. It catalyses the reaction [protein]-L-isoaspartate + S-adenosyl-L-methionine = [protein]-L-isoaspartate alpha-methyl ester + S-adenosyl-L-homocysteine. Its function is as follows. Catalyzes the methyl esterification of L-isoaspartyl residues in peptides and proteins that result from spontaneous decomposition of normal L-aspartyl and L-asparaginyl residues. It plays a role in the repair and/or degradation of damaged proteins. In Janthinobacterium sp. (strain Marseille) (Minibacterium massiliensis), this protein is Protein-L-isoaspartate O-methyltransferase.